We begin with the raw amino-acid sequence, 203 residues long: Glycerol-3-phosphate acyltransferase (203 aa).

5 helical membrane passes run 10–30 (MLIL…GLIL), 59–79 (GAAA…VLLA), 87–107 (AAQV…WLGF), 116–136 (FLGL…LSWL), and 160–180 (LVLL…LMVF).

This sequence belongs to the PlsY family. In terms of assembly, probably interacts with PlsX.

The protein resides in the cell inner membrane. The catalysed reaction is an acyl phosphate + sn-glycerol 3-phosphate = a 1-acyl-sn-glycero-3-phosphate + phosphate. It functions in the pathway lipid metabolism; phospholipid metabolism. Functionally, catalyzes the transfer of an acyl group from acyl-phosphate (acyl-PO(4)) to glycerol-3-phosphate (G3P) to form lysophosphatidic acid (LPA). This enzyme utilizes acyl-phosphate as fatty acyl donor, but not acyl-CoA or acyl-ACP. In Ruegeria pomeroyi (strain ATCC 700808 / DSM 15171 / DSS-3) (Silicibacter pomeroyi), this protein is Glycerol-3-phosphate acyltransferase.